Here is a 625-residue protein sequence, read N- to C-terminus: 1-deoxy-D-xylulose-5-phosphate synthase (625 aa).

Thiamine diphosphate contacts are provided by residues His80 and 121 to 123; that span reads GHS. Asp152 contacts Mg(2+). Thiamine diphosphate-binding positions include 153 to 154, Asn181, Tyr290, and Glu371; that span reads GA. Asn181 is a binding site for Mg(2+).

Belongs to the transketolase family. DXPS subfamily. In terms of assembly, homodimer. It depends on Mg(2+) as a cofactor. Thiamine diphosphate serves as cofactor.

It catalyses the reaction D-glyceraldehyde 3-phosphate + pyruvate + H(+) = 1-deoxy-D-xylulose 5-phosphate + CO2. Its pathway is metabolic intermediate biosynthesis; 1-deoxy-D-xylulose 5-phosphate biosynthesis; 1-deoxy-D-xylulose 5-phosphate from D-glyceraldehyde 3-phosphate and pyruvate: step 1/1. Functionally, catalyzes the acyloin condensation reaction between C atoms 2 and 3 of pyruvate and glyceraldehyde 3-phosphate to yield 1-deoxy-D-xylulose-5-phosphate (DXP). The chain is 1-deoxy-D-xylulose-5-phosphate synthase from Haemophilus influenzae (strain 86-028NP).